We begin with the raw amino-acid sequence, 476 residues long: Arginine biosynthesis bifunctional protein ArgJ, mitochondrial (476 aa).

Substrate is bound by residues T193, K219, T237, E337, N471, and S476. Catalysis depends on T237, which acts as the Nucleophile.

This sequence belongs to the ArgJ family. As to quaternary structure, heterodimer of an alpha and a beta chain. In terms of processing, the alpha and beta chains are autoproteolytically processed from a single precursor protein within the mitochondrion.

The protein resides in the mitochondrion matrix. It carries out the reaction N(2)-acetyl-L-ornithine + L-glutamate = N-acetyl-L-glutamate + L-ornithine. It catalyses the reaction L-glutamate + acetyl-CoA = N-acetyl-L-glutamate + CoA + H(+). The protein operates within amino-acid biosynthesis; L-arginine biosynthesis; L-ornithine and N-acetyl-L-glutamate from L-glutamate and N(2)-acetyl-L-ornithine (cyclic): step 1/1. It functions in the pathway amino-acid biosynthesis; L-arginine biosynthesis; N(2)-acetyl-L-ornithine from L-glutamate: step 1/4. Functionally, catalyzes two activities which are involved in the cyclic version of arginine biosynthesis: the synthesis of acetylglutamate from glutamate and acetyl-CoA, and of ornithine by transacetylation between acetylornithine and glutamate. This is Arginine biosynthesis bifunctional protein ArgJ, mitochondrial from Cryptococcus neoformans var. neoformans serotype D (strain JEC21 / ATCC MYA-565) (Filobasidiella neoformans).